An 825-amino-acid polypeptide reads, in one-letter code: KH domain-containing protein YLL032C (825 aa).

Positions 482-556 constitute a KH domain; the sequence is PAEESFFIPE…ANICLAKNDL (75 aa). Residues 727–740 show a composition bias toward low complexity; the sequence is SSKSNTSNSNTNGN. A disordered region spans residues 727-766; sequence SSKSNTSNSNTNGNFRSMNNAKSRTTIDNTSQSGASPQRH. A compositionally biased stretch (polar residues) spans 741 to 762; it reads FRSMNNAKSRTTIDNTSQSGAS. Ser-762 carries the phosphoserine modification.

The protein resides in the cytoplasm. This chain is KH domain-containing protein YLL032C, found in Saccharomyces cerevisiae (strain ATCC 204508 / S288c) (Baker's yeast).